A 250-amino-acid polypeptide reads, in one-letter code: Ribosomal RNA small subunit methyltransferase J (250 aa).

Residues 101 to 102 (RD), 117 to 118 (ER), 153 to 154 (SS), and Asp-171 each bind S-adenosyl-L-methionine.

Belongs to the methyltransferase superfamily. RsmJ family.

It is found in the cytoplasm. The catalysed reaction is guanosine(1516) in 16S rRNA + S-adenosyl-L-methionine = N(2)-methylguanosine(1516) in 16S rRNA + S-adenosyl-L-homocysteine + H(+). In terms of biological role, specifically methylates the guanosine in position 1516 of 16S rRNA. In Erwinia tasmaniensis (strain DSM 17950 / CFBP 7177 / CIP 109463 / NCPPB 4357 / Et1/99), this protein is Ribosomal RNA small subunit methyltransferase J.